A 1009-amino-acid polypeptide reads, in one-letter code: DNA ligase 3 (1009 aa).

A mitochondrion-targeting transit peptide spans 1 to 42 (MSLAFKIFFPQTLRALSRKELCLFRKHHWRDVRQFSQWSETD). The PARP-type zinc finger occupies 93 to 185 (FCVDYAKRGT…QITQHIADLS (93 aa)). Zn(2+) contacts are provided by C105, C108, H139, and C142. Phosphoserine occurs at positions 210, 216, 227, and 242. The disordered stretch occupies residues 224 to 256 (RKFSGFSAKPNNSGEAPSSPTPKRSLSSSKCDP). The segment covering 240-252 (PSSPTPKRSLSSS) has biased composition (low complexity). 4 interaction with DNA regions span residues 277-280 (PSYN), 318-323 (VYNLND), 388-391 (TKED), and 421-427 (KMNSGAK). An ATP-binding site is contributed by E506. The active-site N6-AMP-lysine intermediate is the K508. Positions 513 and 528 each coordinate ATP. Mg(2+) contacts are provided by E560 and E655. Positions 660, 671, and 675 each coordinate ATP. The disordered stretch occupies residues 842–917 (AGDEGSSTTG…LATKSSPVKV (76 aa)). 2 stretches are compositionally biased toward low complexity: residues 845-854 (EGSSTTGGSS) and 863-877 (SAVSRKAPSKPSAST). The segment covering 884-898 (LSNSNSKDGNMQTAK) has biased composition (polar residues). S913 is modified (phosphoserine). In terms of domain architecture, BRCT spans 933–1009 (VLLDIFTGVR…IRKRRLVAPC (77 aa)).

This sequence belongs to the ATP-dependent DNA ligase family. As to quaternary structure, isoform 3 interacts (via BRCT domain) with the nuclear DNA-repair protein XRCC1. Interacts with POLG. Interacts with POLB. Mg(2+) is required as a cofactor. As to expression, testis, thymus, prostate and heart.

Its subcellular location is the mitochondrion. The protein localises to the nucleus. The enzyme catalyses ATP + (deoxyribonucleotide)n-3'-hydroxyl + 5'-phospho-(deoxyribonucleotide)m = (deoxyribonucleotide)n+m + AMP + diphosphate.. Isoform 3 functions as a heterodimer with DNA-repair protein XRCC1 in the nucleus and can correct defective DNA strand-break repair and sister chromatid exchange following treatment with ionizing radiation and alkylating agents. Isoform 1 is targeted to mitochondria, where it functions as a DNA ligase in mitochondrial base-excision DNA repair. This is DNA ligase 3 (LIG3) from Homo sapiens (Human).